We begin with the raw amino-acid sequence, 149 residues long: Transthyretin (149 aa).

An N-terminal signal peptide occupies residues 1–20; the sequence is MAFHSLLLLCLAGLLFVSEA. Cysteine 32 bears the Sulfocysteine mark. Lysine 37 is a binding site for L-thyroxine. Position 64 is a 4-carboxyglutamate (glutamate 64). The L-thyroxine site is built by glutamate 76 and serine 139.

This sequence belongs to the transthyretin family. In terms of assembly, homotetramer. Dimer of dimers. In the homotetramer, subunits assemble around a central channel that can accommodate two ligand molecules. Interacts with RBP4. Sulfonation of the reactive cysteine Cys-32 enhances the stability of the native conformation of TTR, avoiding misassembly of the protein leading to amyloid formation. In terms of tissue distribution, detected in plasma (at protein level). Detected in liver.

It localises to the secreted. In terms of biological role, thyroid hormone-binding protein. Probably transports thyroxine from the bloodstream to the brain. This is Transthyretin (TTR) from Petaurus breviceps (Australian sugar glider).